Reading from the N-terminus, the 273-residue chain is Phosphate import ATP-binding protein PstB (273 aa).

Positions 27-268 (VTVRNLNFYY…PSDRRTQDYI (242 aa)) constitute an ABC transporter domain. Position 59 to 66 (59 to 66 (GPSGCGKS)) interacts with ATP.

The protein belongs to the ABC transporter superfamily. Phosphate importer (TC 3.A.1.7) family. In terms of assembly, the complex is composed of two ATP-binding proteins (PstB), two transmembrane proteins (PstC and PstA) and a solute-binding protein (PstS).

The protein localises to the cell inner membrane. It carries out the reaction phosphate(out) + ATP + H2O = ADP + 2 phosphate(in) + H(+). Part of the ABC transporter complex PstSACB involved in phosphate import. Responsible for energy coupling to the transport system. This Bradyrhizobium diazoefficiens (strain JCM 10833 / BCRC 13528 / IAM 13628 / NBRC 14792 / USDA 110) protein is Phosphate import ATP-binding protein PstB.